The sequence spans 337 residues: Junctional sarcoplasmic reticulum protein 1 (337 aa).

The mediates interaction with CACNA1S stretch occupies residues 1–84; the sequence is MATRAMEELD…EKEPVSKVTS (84 aa). 2 disordered regions span residues 23–125 and 159–337; these read SALA…ELPW and EAPA…KGRD. Basic and acidic residues-rich tracts occupy residues 49–59 and 69–79; these read SRSHDSQERVT and TKPKKMEKEPV. Residues 165–180 show a composition bias toward low complexity; that stretch reads PESWASSSSSPKGPAS. Over residues 199–213 the composition is skewed to basic and acidic residues; sequence SKLEERVQIPRSEEA. Over residues 214-225 the composition is skewed to acidic residues; it reads AEKDEWESEEAA. Basic and acidic residues-rich tracts occupy residues 236 to 277, 285 to 309, and 316 to 325; these read GPKE…RGAR, RRWE…DRKR, and RRPDEEDRPL. The span at 326-337 shows a compositional bias: basic residues; it reads GRQKRRAGKGRD.

In terms of assembly, interacts with CACNA1S, CACNB1 and calsequestrin.

It localises to the sarcoplasmic reticulum membrane. The protein localises to the endoplasmic reticulum membrane. Its function is as follows. Involved in skeletal muscle excitation/contraction coupling (EC), probably acting as a regulator of the voltage-sensitive calcium channel CACNA1S. EC is a physiological process whereby an electrical signal (depolarization of the plasma membrane) is converted into a chemical signal, a calcium gradient, by the opening of ryanodine receptor calcium release channels. May regulate CACNA1S membrane targeting and activity. This is Junctional sarcoplasmic reticulum protein 1 (JSRP1) from Bos taurus (Bovine).